Here is a 217-residue protein sequence, read N- to C-terminus: Protein LURP-one-related 15 (217 aa).

Position 1 is an N-acetylmethionine (Met1).

It belongs to the LOR family.

Its function is as follows. Might be related to the phospholipid scramblase and tubby-like superfamily of membrane tethered transcription factors. This is Protein LURP-one-related 15 from Arabidopsis thaliana (Mouse-ear cress).